A 128-amino-acid chain; its full sequence is Probable 4-amino-4-deoxy-L-arabinose-phosphoundecaprenol flippase subunit ArnF (128 aa).

Over 1–2 the chain is Cytoplasmic; the sequence is MG. A helical transmembrane segment spans residues 3–23; that stretch reads LMWGLFSVIIASAAQLSLGFA. Residues 24-35 are Periplasmic-facing; that stretch reads ASHLPPMTHLWD. The helical transmembrane segment at 36–56 threads the bilayer; that stretch reads FIAALLAFGLDARILLLGLLG. The Cytoplasmic portion of the chain corresponds to 57-76; the sequence is YLLSVFCWYKTLHKLALSKA. The chain crosses the membrane as a helical span at residues 77-97; that stretch reads YALLSMSYVLVWIASMVLPGW. Over 98–100 the chain is Periplasmic; that stretch reads EGT. The chain crosses the membrane as a helical span at residues 101-121; sequence FSLKALLGVACIMSGLMLIFL. Residues 122–128 lie on the Cytoplasmic side of the membrane; that stretch reads PTTKQRY.

Belongs to the ArnF family. In terms of assembly, heterodimer of ArnE and ArnF.

It localises to the cell inner membrane. It participates in bacterial outer membrane biogenesis; lipopolysaccharide biosynthesis. Its function is as follows. Translocates 4-amino-4-deoxy-L-arabinose-phosphoundecaprenol (alpha-L-Ara4N-phosphoundecaprenol) from the cytoplasmic to the periplasmic side of the inner membrane. This Escherichia coli O127:H6 (strain E2348/69 / EPEC) protein is Probable 4-amino-4-deoxy-L-arabinose-phosphoundecaprenol flippase subunit ArnF.